A 143-amino-acid polypeptide reads, in one-letter code: Large ribosomal subunit protein uL15 (143 aa).

Positions 1–48 (MRLNTISPSKGAKHSSKRLGRGIGSGLGKTSGRGHKGQKARSGCSIHR) are disordered. Over residues 11–20 (GAKHSSKRLG) the composition is skewed to basic residues. The segment covering 21–31 (RGIGSGLGKTS) has biased composition (gly residues).

The protein belongs to the universal ribosomal protein uL15 family. As to quaternary structure, part of the 50S ribosomal subunit.

In terms of biological role, binds to the 23S rRNA. This Baumannia cicadellinicola subsp. Homalodisca coagulata protein is Large ribosomal subunit protein uL15.